A 123-amino-acid chain; its full sequence is uncharacterized protein (123 aa).

A helical membrane pass occupies residues 34-53 (LPFFFLFLGNLGKFFFLWPL).

It localises to the membrane. This is an uncharacterized protein from Saccharomyces cerevisiae (strain ATCC 204508 / S288c) (Baker's yeast).